Reading from the N-terminus, the 343-residue chain is Heat-inducible transcription repressor HrcA (343 aa).

This sequence belongs to the HrcA family.

Its function is as follows. Negative regulator of class I heat shock genes (grpE-dnaK-dnaJ and groELS operons). Prevents heat-shock induction of these operons. This is Heat-inducible transcription repressor HrcA from Clostridium acetobutylicum (strain ATCC 824 / DSM 792 / JCM 1419 / IAM 19013 / LMG 5710 / NBRC 13948 / NRRL B-527 / VKM B-1787 / 2291 / W).